We begin with the raw amino-acid sequence, 255 residues long: NADPH-dependent FMN reductase ArsH (255 aa).

43 to 50 (SLRARSFS) contributes to the FMN binding site.

The protein belongs to the ArsH family. In terms of assembly, homotetramer. The cofactor is FMN.

Has NADPH-dependent FMN reductase activity and very low azoreductase activity. No activity with NADH. This Shigella flexneri protein is NADPH-dependent FMN reductase ArsH.